Reading from the N-terminus, the 274-residue chain is Large ribosomal subunit protein uL2cz/uL2cy (274 aa).

The interval 224-274 is disordered; sequence NPVDHPHGGGEGRAPIGRKKPATPWGYPALGRRSRKRNKYSDNLILRRRSK.

This sequence belongs to the universal ribosomal protein uL2 family. In terms of assembly, part of the 50S ribosomal subunit.

The protein localises to the plastid. Its subcellular location is the chloroplast. The protein is Large ribosomal subunit protein uL2cz/uL2cy (rpl2-A) of Morus indica (Mulberry).